We begin with the raw amino-acid sequence, 340 residues long: UDP-N-acetylglucosamine--N-acetylmuramyl-(pentapeptide) pyrophosphoryl-undecaprenol N-acetylglucosamine transferase (340 aa).

Residues T10 to G12, N124, S179, and Q277 contribute to the UDP-N-acetyl-alpha-D-glucosamine site.

Belongs to the glycosyltransferase 28 family. MurG subfamily.

It is found in the cell inner membrane. The catalysed reaction is di-trans,octa-cis-undecaprenyl diphospho-N-acetyl-alpha-D-muramoyl-L-alanyl-D-glutamyl-meso-2,6-diaminopimeloyl-D-alanyl-D-alanine + UDP-N-acetyl-alpha-D-glucosamine = di-trans,octa-cis-undecaprenyl diphospho-[N-acetyl-alpha-D-glucosaminyl-(1-&gt;4)]-N-acetyl-alpha-D-muramoyl-L-alanyl-D-glutamyl-meso-2,6-diaminopimeloyl-D-alanyl-D-alanine + UDP + H(+). Its pathway is cell wall biogenesis; peptidoglycan biosynthesis. Functionally, cell wall formation. Catalyzes the transfer of a GlcNAc subunit on undecaprenyl-pyrophosphoryl-MurNAc-pentapeptide (lipid intermediate I) to form undecaprenyl-pyrophosphoryl-MurNAc-(pentapeptide)GlcNAc (lipid intermediate II). This Sulfurimonas denitrificans (strain ATCC 33889 / DSM 1251) (Thiomicrospira denitrificans (strain ATCC 33889 / DSM 1251)) protein is UDP-N-acetylglucosamine--N-acetylmuramyl-(pentapeptide) pyrophosphoryl-undecaprenol N-acetylglucosamine transferase.